Reading from the N-terminus, the 232-residue chain is E3 ubiquitin-protein ligase RNF125 (232 aa).

Positions methionine 1–glycine 10 are enriched in polar residues. Positions methionine 1–glutamate 23 are disordered. Residue glycine 2 is the site of N-myristoyl glycine attachment. Zn(2+) contacts are provided by cysteine 37 and cysteine 40. Residues cysteine 37–arginine 76 form an RING-type zinc finger. Positions valine 43–histidine 45 are interaction with the C2HC RNF-type zinc finger. Positions 52, 54, 57, 60, 72, 75, 100, and 103 each coordinate Zn(2+). A C2HC RNF-type zinc finger spans residues cysteine 100–cysteine 119. Residues leucine 109–arginine 113 are interaction with the RING-type zinc finger. Histidine 115 and cysteine 119 together coordinate Zn(2+). The tract at residues glutamine 120–proline 128 is linker region. Positions glutamate 210–glutamate 224 are required for interaction with ubiquitin and for autoubiquitination.

Interacts with UBE2D1. Interacts with VCP/p97; leading to recruit RNF125 to RIGI and promote ubiquitination of RIGI. In terms of processing, autoubiquitinated, leading to its subsequent proteasomal degradation. In terms of tissue distribution, predominantly expressed in lymphoid tissues, including bone marrow, spleen and thymus. Also weakly expressed in other tissues. Predominant in the CD4(+) and CD8(+) T-cells, suggesting that it is preferentially confined to T-cells.

Its subcellular location is the golgi apparatus membrane. The catalysed reaction is S-ubiquitinyl-[E2 ubiquitin-conjugating enzyme]-L-cysteine + [acceptor protein]-L-lysine = [E2 ubiquitin-conjugating enzyme]-L-cysteine + N(6)-ubiquitinyl-[acceptor protein]-L-lysine.. It participates in protein modification; protein ubiquitination. In terms of biological role, E3 ubiquitin-protein ligase that mediates ubiquitination and subsequent proteasomal degradation of target proteins, such as RIGI, MAVS/IPS1, IFIH1/MDA5, JAK1 and p53/TP53. Acts as a negative regulator of type I interferon production by mediating ubiquitination of RIGI at 'Lys-181', leading to RIGI degradation. Mediates ubiquitination and subsequent degradation of p53/TP53. Mediates ubiquitination and subsequent degradation of JAK1. Acts as a positive regulator of T-cell activation. This is E3 ubiquitin-protein ligase RNF125 from Homo sapiens (Human).